A 316-amino-acid polypeptide reads, in one-letter code: Pantothenate kinase (316 aa).

95–102 (GSVAVGKS) is a binding site for ATP.

Belongs to the prokaryotic pantothenate kinase family.

It is found in the cytoplasm. The enzyme catalyses (R)-pantothenate + ATP = (R)-4'-phosphopantothenate + ADP + H(+). Its pathway is cofactor biosynthesis; coenzyme A biosynthesis; CoA from (R)-pantothenate: step 1/5. This chain is Pantothenate kinase, found in Shigella boydii serotype 18 (strain CDC 3083-94 / BS512).